The primary structure comprises 407 residues: MKYDHLLVRYGELTLKGSNRKKFVNQLRNNVNKSLKGLDGFVVKGKRDRMYIELEDHADINEITNRLSKIFGIKSISPVLKVEKSIEAMSAETIKFAQQFEENSTFKIDVKRADKNFPMDTYELQRELGGTVLKQIENVSVNVKRPDHEIRVEVRLDAIYMYEEVVPGSGGLPVGTGGKTLLMLSGGIDSPVAGMEVMRRGVTIEAIHFHSPPFTSDQAKEKVIELTRILAERVGPIKLHIVPFTELQKQVNKVVHPRYTMTSTRRMMMRVADKLVHQIGAYAIVNGENLGQVASQTLHSMYAINNVTSTPVLRPLLTYDKEEIIIKSKEIGTFETSIQPFEDCCTIFTPKNPVTEPNFDKVVQYESVFDFEEMINRAVENIETLEITSDYKTIKEQQTNQLINDFL.

The 105-residue stretch at 61–165 folds into the THUMP domain; sequence NEITNRLSKI…LDAIYMYEEV (105 aa). ATP-binding positions include 183–184, 208–209, arginine 265, glycine 287, and glutamine 296; these read ML and HF.

It belongs to the ThiI family.

The protein resides in the cytoplasm. It carries out the reaction [ThiI sulfur-carrier protein]-S-sulfanyl-L-cysteine + a uridine in tRNA + 2 reduced [2Fe-2S]-[ferredoxin] + ATP + H(+) = [ThiI sulfur-carrier protein]-L-cysteine + a 4-thiouridine in tRNA + 2 oxidized [2Fe-2S]-[ferredoxin] + AMP + diphosphate. The catalysed reaction is [ThiS sulfur-carrier protein]-C-terminal Gly-Gly-AMP + S-sulfanyl-L-cysteinyl-[cysteine desulfurase] + AH2 = [ThiS sulfur-carrier protein]-C-terminal-Gly-aminoethanethioate + L-cysteinyl-[cysteine desulfurase] + A + AMP + 2 H(+). Its pathway is cofactor biosynthesis; thiamine diphosphate biosynthesis. Functionally, catalyzes the ATP-dependent transfer of a sulfur to tRNA to produce 4-thiouridine in position 8 of tRNAs, which functions as a near-UV photosensor. Also catalyzes the transfer of sulfur to the sulfur carrier protein ThiS, forming ThiS-thiocarboxylate. This is a step in the synthesis of thiazole, in the thiamine biosynthesis pathway. The sulfur is donated as persulfide by IscS. The sequence is that of Probable tRNA sulfurtransferase from Staphylococcus aureus (strain MRSA252).